Consider the following 178-residue polypeptide: Protein GrpE (178 aa).

Positions 1-22 (MSENQNPSPSPEEIEAAMSANA) are disordered.

Belongs to the GrpE family. As to quaternary structure, homodimer.

The protein localises to the cytoplasm. Its function is as follows. Participates actively in the response to hyperosmotic and heat shock by preventing the aggregation of stress-denatured proteins, in association with DnaK and GrpE. It is the nucleotide exchange factor for DnaK and may function as a thermosensor. Unfolded proteins bind initially to DnaJ; upon interaction with the DnaJ-bound protein, DnaK hydrolyzes its bound ATP, resulting in the formation of a stable complex. GrpE releases ADP from DnaK; ATP binding to DnaK triggers the release of the substrate protein, thus completing the reaction cycle. Several rounds of ATP-dependent interactions between DnaJ, DnaK and GrpE are required for fully efficient folding. The chain is Protein GrpE from Acidovorax ebreus (strain TPSY) (Diaphorobacter sp. (strain TPSY)).